Here is an 89-residue protein sequence, read N- to C-terminus: C-C motif chemokine 18 (89 aa).

The first 20 residues, 1 to 20 (MKGLAAALLVLVCTMALCSC), serve as a signal peptide directing secretion. 2 disulfide bridges follow: cysteine 30–cysteine 54 and cysteine 31–cysteine 70.

Belongs to the intercrine beta (chemokine CC) family. The Cys-30/Cys-54 disulfide bond is required for activity. Expressed at high levels in lung, lymph nodes, placenta, bone marrow, dendritic cells present in germinal centers and T-cell areas of secondary lymphoid organs and macrophages derived from peripheral blood monocytes. Not expressed by peripheral blood monocytes and a monocyte-to-macrophage differentiation is a prerequisite for expression. Expressed in synovial fluids from patients with rheumatoid and septic arthritis and in ovarian carcinoma ascitic fluid.

It is found in the secreted. Its function is as follows. Chemotactic factor that attracts lymphocytes but not monocytes or granulocytes. May be involved in B-cell migration into B-cell follicles in lymph nodes. Attracts naive T-lymphocytes toward dendritic cells and activated macrophages in lymph nodes, has chemotactic activity for naive T-cells, CD4+ and CD8+ T-cells and thus may play a role in both humoral and cell-mediated immunity responses. In Homo sapiens (Human), this protein is C-C motif chemokine 18 (CCL18).